Here is a 287-residue protein sequence, read N- to C-terminus: Ribosomal RNA small subunit methyltransferase A (287 aa).

S-adenosyl-L-methionine contacts are provided by N35, V37, G62, E83, D113, and N131.

This sequence belongs to the class I-like SAM-binding methyltransferase superfamily. rRNA adenine N(6)-methyltransferase family. RsmA subfamily.

The protein resides in the cytoplasm. The catalysed reaction is adenosine(1518)/adenosine(1519) in 16S rRNA + 4 S-adenosyl-L-methionine = N(6)-dimethyladenosine(1518)/N(6)-dimethyladenosine(1519) in 16S rRNA + 4 S-adenosyl-L-homocysteine + 4 H(+). Specifically dimethylates two adjacent adenosines (A1518 and A1519) in the loop of a conserved hairpin near the 3'-end of 16S rRNA in the 30S particle. May play a critical role in biogenesis of 30S subunits. This is Ribosomal RNA small subunit methyltransferase A from Thermobifida fusca (strain YX).